We begin with the raw amino-acid sequence, 129 residues long: Glycine cleavage system H protein (129 aa).

The region spanning 24–106 is the Lipoyl-binding domain; it reads TYTVGITEHA…YAGGWIFKIK (83 aa). Position 65 is an N6-lipoyllysine (Lys65).

Belongs to the GcvH family. As to quaternary structure, the glycine cleavage system is composed of four proteins: P, T, L and H. The cofactor is (R)-lipoate.

In terms of biological role, the glycine cleavage system catalyzes the degradation of glycine. The H protein shuttles the methylamine group of glycine from the P protein to the T protein. The polypeptide is Glycine cleavage system H protein (Escherichia coli O127:H6 (strain E2348/69 / EPEC)).